The primary structure comprises 161 residues: MAEVANNEQQAPQFNIQRVYTKDVSFETPNSPAVFQKEWNPEVKLDLDTRSAKLADDVYEVVLSLTVTAQNGGDTAFLCEVQQAGIFSITGLTEPQLAHSLGAYCPNILFPYARETVGSLVGRGTFPQLNLAPVNFDALFAQYVQQRQAAATAPAAEEANA.

The protein belongs to the SecB family. As to quaternary structure, homotetramer, a dimer of dimers. One homotetramer interacts with 1 SecA dimer.

It is found in the cytoplasm. In terms of biological role, one of the proteins required for the normal export of preproteins out of the cell cytoplasm. It is a molecular chaperone that binds to a subset of precursor proteins, maintaining them in a translocation-competent state. It also specifically binds to its receptor SecA. The protein is Protein-export protein SecB of Shewanella baltica (strain OS223).